Reading from the N-terminus, the 749-residue chain is Dynamin-1-like protein (749 aa).

At Met1 the chain carries N-acetylmethionine. The region spanning 22-315 is the Dynamin-type G domain; that stretch reads IIQLPQIVVV…LMHHIRDCLP (294 aa). The interval 32–39 is G1 motif; sequence GTQSSGKS. 32-40 is a binding site for GTP; that stretch reads GTQSSGKSS. A G2 motif region spans residues 58–60; sequence VTR. The tract at residues 74-93 is disordered; it reads DKRKTTGEENDPATWKNSRH. Residues 159–162 form a G3 motif region; sequence DLPG. Residues 228–231 form a G4 motif region; the sequence is TKLD. Residues 228-234 and 259-262 each bind GTP; these read TKLDLMD and NRSQ. Positions 258–261 are G5 motif; it reads VNRS. Positions 357-502 are middle domain; it reads YCNTIEGTAK…NEMVHNLVAI (146 aa). The segment at 461 to 698 is interaction with GSK3B; the sequence is NYSTQELLRF…NHVKDTLQSE (238 aa). The segment at 515-582 is b domain; it reads ADACGLMNNN…IQESRRETKN (68 aa). The interval 536–604 is disordered; it reads ELPSAVSRDK…QEPTTGNWRG (69 aa). Phosphoserine is present on Ser542. Glycyl lysine isopeptide (Lys-Gly) (interchain with G-Cter in SUMO) cross-links involve residues Lys545 and Lys548. The span at 550 to 567 shows a compositional bias: low complexity; that stretch reads PSALAPASQEPSPAASAE. At Ser561 the chain carries Phosphoserine. Basic and acidic residues predominate over residues 568–581; that stretch reads ADGKLIQESRRETK. Residues Lys571 and Lys581 each participate in a glycyl lysine isopeptide (Lys-Gly) (interchain with G-Cter in SUMO) cross-link. O-linked (GlcNAc) threonine glycosylation is found at Thr598 and Thr599. A Glycyl lysine isopeptide (Lys-Gly) (interchain with G-Cter in SUMO) cross-link involves residue Lys607. At Lys610 the chain carries N6-acetyllysine; alternate. Lys610 is covalently cross-linked (Glycyl lysine isopeptide (Lys-Gly) (interchain with G-Cter in SUMO); alternate). Lys619 participates in a covalent cross-link: Glycyl lysine isopeptide (Lys-Gly) (interchain with G-Cter in SUMO). At Ser620 the chain carries Phosphoserine. A Glycyl lysine isopeptide (Lys-Gly) (interchain with G-Cter in SUMO) cross-link involves residue Lys621. Residue Ser629 is modified to Phosphoserine; by CDK1 and PINK1. Ser650 carries the phosphoserine; by CAMK1 and PKA modification. Cys657 bears the S-nitrosocysteine mark. In terms of domain architecture, GED spans 657–748; that stretch reads CEVIERLIKS…IIAEIRETHL (92 aa). The tract at residues 667–681 is important for homodimerization; sequence YFLIVRKNIQDSVPK.

The protein belongs to the TRAFAC class dynamin-like GTPase superfamily. Dynamin/Fzo/YdjA family. Homotetramer; dimerizes through the N-terminal GTP-middle region of one molecule binding to the GED domain of another DNM1L molecule. Oligomerizes in a GTP-dependent manner to form membrane-associated tubules with a spiral pattern. Interacts with GSK3B and MARCHF5. Interacts (via the GTPase and B domains) with UBE2I; the interaction promotes sumoylation of DNM1L, mainly in its B domain. Interacts with PPP3CA; the interaction dephosphorylates DNM1L and regulates its transition to mitochondria. Interacts with BCL2L1 isoform BCL-X(L) and CLTA; DNM1L and BCL2L1 isoform BCL-X(L) may form a complex in synaptic vesicles that also contains clathrin and MFF. Interacts with MFF; the interaction is inhinited by C11orf65/MFI. Interacts with FIS1. Interacts with MIEF2 and MIEF1; GTP-dependent, regulates GTP hydrolysis and DNM1L oligomerization. Interacts with PGAM5; this interaction leads to dephosphorylation at Ser-656 and activation of GTPase activity and eventually to mitochondria fragmentation. Interacts with RALBP1; during mitosis, recruits DNM1L to the mitochondrion and mediates its activation by the mitotic kinase cyclin B-CDK1. Phosphorylation/dephosphorylation events on two sites near the GED domain regulate mitochondrial fission. Phosphorylation on Ser-650 by CAMK1 and PKA inhibits the GTPase activity, leading to a defect in mitochondrial fission promoting mitochondrial elongation. Dephosphorylated on this site by PPP3CA which promotes mitochondrial fission. Phosphorylation on Ser-629 by CDK1 and PINK1 activates the GTPase activity and promotes mitochondrial fission. Phosphorylated in a circadian manner at Ser-650. In terms of processing, sumoylated on various lysine residues within the B domain, probably by MUL1. Sumoylation positively regulates mitochondrial fission. Desumoylated by SENP5 during G2/M transition of mitosis. Appears to be linked to its catalytic activity. Post-translationally, S-nitrosylation increases DNM1L dimerization, mitochondrial fission and causes neuronal damage. O-GlcNAcylation augments the level of the GTP-bound active form of DNM1L and induces translocation from the cytoplasm to mitochondria in cardiomyocytes. It also decreases phosphorylation at Ser-650. In terms of processing, ubiquitination by MARCHF5 affects mitochondrial morphology.

The protein resides in the cytoplasm. Its subcellular location is the cytosol. The protein localises to the golgi apparatus. It localises to the endomembrane system. It is found in the mitochondrion outer membrane. The protein resides in the peroxisome. Its subcellular location is the membrane. The protein localises to the clathrin-coated pit. It localises to the cytoplasmic vesicle. It is found in the secretory vesicle. The protein resides in the synaptic vesicle membrane. It catalyses the reaction GTP + H2O = GDP + phosphate + H(+). Its function is as follows. Functions in mitochondrial and peroxisomal division. Mediates membrane fission through oligomerization into membrane-associated tubular structures that wrap around the scission site to constrict and sever the mitochondrial membrane through a GTP hydrolysis-dependent mechanism. The specific recruitment at scission sites is mediated by membrane receptors like MFF, MIEF1 and MIEF2 for mitochondrial membranes. While the recruitment by the membrane receptors is GTP-dependent, the following hydrolysis of GTP induces the dissociation from the receptors and allows DNM1L filaments to curl into closed rings that are probably sufficient to sever a double membrane. Acts downstream of PINK1 to promote mitochondrial fission in a PRKN-dependent manner. Plays an important role in mitochondrial fission during mitosis. Through its function in mitochondrial division, ensures the survival of at least some types of postmitotic neurons, including Purkinje cells, by suppressing oxidative damage. Required for normal brain development, including that of cerebellum. Facilitates developmentally regulated apoptosis during neural tube formation. Required for a normal rate of cytochrome c release and caspase activation during apoptosis; this requirement may depend upon the cell type and the physiological apoptotic cues. Required for formation of endocytic vesicles. Proposed to regulate synaptic vesicle membrane dynamics through association with BCL2L1 isoform Bcl-X(L) which stimulates its GTPase activity in synaptic vesicles; the function may require its recruitment by MFF to clathrin-containing vesicles. Required for programmed necrosis execution. Rhythmic control of its activity following phosphorylation at Ser-650 is essential for the circadian control of mitochondrial ATP production. The sequence is that of Dynamin-1-like protein from Bos taurus (Bovine).